The chain runs to 234 residues: Ras-related protein Rab-20 (234 aa).

Residues glycine 17, lysine 18, threonine 19, aspartate 32, and threonine 36 each coordinate GTP. Residue threonine 19 participates in Mg(2+) binding. Short sequence motifs (switch) lie at residues 28-41 (RRFPDTVSTVGGAF) and 55-72 (DTAGREQFHGLGSMYCRG). Residues threonine 36 and aspartate 55 each contribute to the Mg(2+) site. GTP contacts are provided by glycine 58, asparagine 113, lysine 114, and aspartate 116. The tract at residues 125–144 (GQEKEECSPNMDAGDRVSPR) is disordered. Residues 126–142 (QEKEECSPNMDAGDRVS) are compositionally biased toward basic and acidic residues. Residues alanine 184 and lysine 185 each coordinate GTP. The disordered stretch occupies residues 212–234 (RPSHTVDISSHKPPKRTRSGCCA). Over residues 223 to 234 (KPPKRTRSGCCA) the composition is skewed to basic residues. S-geranylgeranyl cysteine attachment occurs at residues cysteine 232 and cysteine 233.

This sequence belongs to the small GTPase superfamily. Rab family. Mg(2+) is required as a cofactor. As to expression, low or absent expression in normal pancreas and stronger expression in 15 of 18 exocrine pancreatic adenocarcinomas (at protein level).

It is found in the golgi apparatus. The protein resides in the cytoplasmic vesicle. The protein localises to the phagosome. Its subcellular location is the phagosome membrane. It carries out the reaction GTP + H2O = GDP + phosphate + H(+). Regulated by guanine nucleotide exchange factors (GEFs) which promote the exchange of bound GDP for free GTP. Regulated by GTPase activating proteins (GAPs) which increase the GTP hydrolysis activity. Inhibited by GDP dissociation inhibitors (GDIs). In terms of biological role, the small GTPases Rab are key regulators of intracellular membrane trafficking, from the formation of transport vesicles to their fusion with membranes. Rabs cycle between an inactive GDP-bound form and an active GTP-bound form that is able to recruit to membranes different sets of downstream effectors directly responsible for vesicle formation, movement, tethering and fusion. RAB20 plays a role in apical endocytosis/recycling. Plays a role in the maturation and acidification of phagosomes that engulf pathogens, such as S.aureus and M.tuberculosis. Plays a role in the fusion of phagosomes with lysosomes. This chain is Ras-related protein Rab-20, found in Homo sapiens (Human).